Here is a 95-residue protein sequence, read N- to C-terminus: Aspartyl/glutamyl-tRNA(Asn/Gln) amidotransferase subunit C (95 aa).

Belongs to the GatC family. In terms of assembly, heterotrimer of A, B and C subunits.

The enzyme catalyses L-glutamyl-tRNA(Gln) + L-glutamine + ATP + H2O = L-glutaminyl-tRNA(Gln) + L-glutamate + ADP + phosphate + H(+). It catalyses the reaction L-aspartyl-tRNA(Asn) + L-glutamine + ATP + H2O = L-asparaginyl-tRNA(Asn) + L-glutamate + ADP + phosphate + 2 H(+). Functionally, allows the formation of correctly charged Asn-tRNA(Asn) or Gln-tRNA(Gln) through the transamidation of misacylated Asp-tRNA(Asn) or Glu-tRNA(Gln) in organisms which lack either or both of asparaginyl-tRNA or glutaminyl-tRNA synthetases. The reaction takes place in the presence of glutamine and ATP through an activated phospho-Asp-tRNA(Asn) or phospho-Glu-tRNA(Gln). This Syntrophus aciditrophicus (strain SB) protein is Aspartyl/glutamyl-tRNA(Asn/Gln) amidotransferase subunit C.